A 620-amino-acid polypeptide reads, in one-letter code: DNA mismatch repair protein MutL (620 aa).

The interval 353 to 375 is disordered; that stretch reads SRANGANDFTGRPFSGTERPRGG.

It belongs to the DNA mismatch repair MutL/HexB family.

Functionally, this protein is involved in the repair of mismatches in DNA. It is required for dam-dependent methyl-directed DNA mismatch repair. May act as a 'molecular matchmaker', a protein that promotes the formation of a stable complex between two or more DNA-binding proteins in an ATP-dependent manner without itself being part of a final effector complex. This is DNA mismatch repair protein MutL from Chelativorans sp. (strain BNC1).